Consider the following 440-residue polypeptide: Tuliposide B-converting enzyme 1, amyloplastic (440 aa).

The transit peptide at 1-58 (MSIVSFCSSLPAGPHGFKHGRGTRDMVHMPCIVRRTARSPAQACRLLRWNKYHCAAVP) directs the protein to the amyloplast. Ser-232 (acyl-ester intermediate) is an active-site residue. Residues Asp-325 and His-357 each act as charge relay system in the active site.

This sequence belongs to the AB hydrolase superfamily. As to quaternary structure, homodimer. Not glycosylated. As to expression, expressed in the pollen grains.

It localises to the plastid. Its subcellular location is the amyloplast. It carries out the reaction 6-tuliposide B = tulipalin B + D-glucose. Its activity is regulated as follows. Inhibited by Ag(+), Cu(2+), Fe(2+), Hg(2+), V(3+) and phenylmethylsulfonyl fluoride (PMSF). In terms of biological role, lactone-forming carboxylesterase, specifically catalyzing intramolecular transesterification, but not hydrolysis. Involved in the biosynthesis of tulipalins, defensive chemicals that show antimicrobial activities against a broad range of strains of bacteria and fungi. Substrates are 6-tuliposide B &gt; 6-tuliposide A. This Tulipa gesneriana (Garden tulip) protein is Tuliposide B-converting enzyme 1, amyloplastic.